The chain runs to 477 residues: Bifunctional protein HldE (477 aa).

The ribokinase stretch occupies residues 1–318 (MKVTLPDFRR…ENAIRGRADT (318 aa)). Residue 195–198 (NLSE) coordinates ATP. Asp264 is an active-site residue. The tract at residues 344-477 (MTNGVFDILH…INIIRQGQND (134 aa)) is cytidylyltransferase.

It in the N-terminal section; belongs to the carbohydrate kinase PfkB family. The protein in the C-terminal section; belongs to the cytidylyltransferase family. As to quaternary structure, homodimer.

The catalysed reaction is D-glycero-beta-D-manno-heptose 7-phosphate + ATP = D-glycero-beta-D-manno-heptose 1,7-bisphosphate + ADP + H(+). It carries out the reaction D-glycero-beta-D-manno-heptose 1-phosphate + ATP + H(+) = ADP-D-glycero-beta-D-manno-heptose + diphosphate. It participates in nucleotide-sugar biosynthesis; ADP-L-glycero-beta-D-manno-heptose biosynthesis; ADP-L-glycero-beta-D-manno-heptose from D-glycero-beta-D-manno-heptose 7-phosphate: step 1/4. The protein operates within nucleotide-sugar biosynthesis; ADP-L-glycero-beta-D-manno-heptose biosynthesis; ADP-L-glycero-beta-D-manno-heptose from D-glycero-beta-D-manno-heptose 7-phosphate: step 3/4. In terms of biological role, catalyzes the phosphorylation of D-glycero-D-manno-heptose 7-phosphate at the C-1 position to selectively form D-glycero-beta-D-manno-heptose-1,7-bisphosphate. Its function is as follows. Catalyzes the ADP transfer from ATP to D-glycero-beta-D-manno-heptose 1-phosphate, yielding ADP-D-glycero-beta-D-manno-heptose. This Edwardsiella ictaluri (strain 93-146) protein is Bifunctional protein HldE.